Consider the following 175-residue polypeptide: Urease accessory protein UreE (175 aa).

Residues Phe-134–Arg-175 form a disordered region.

This sequence belongs to the UreE family.

It localises to the cytoplasm. Involved in urease metallocenter assembly. Binds nickel. Probably functions as a nickel donor during metallocenter assembly. This chain is Urease accessory protein UreE, found in Dechloromonas aromatica (strain RCB).